The chain runs to 417 residues: MSSAFDFEPQPRRASVAVDVGGVIVGGGAPVVVQSMTNTDTADIDATVAQVAALHKAGSELVRITVDRDESAAAVPKIRERLLRLGLDVPLVGDFHYIGHKLLADHPACAEALAKYRINPGNVGFKDKKDKQFAEIVEMAIRYDKPVRIGVNWGSLDQELLTRLMDANKANGFPLTAQQVTRETIVQSALLSAELAEELGLPRNRIILSAKVSGVQDLIAVYAMLSARSDHALHLGLTEAGMGTKGIVASSASLGILMQQGIGDTIRISLTPEPGGDRTREVQVAQELLQVMGFRQFIPVVAACPGCGRTTSTVFQELAQKIQEDIRSSMPVWREKYPGVEALKVAVMGCIVNGPGESKHADIGISLPGTGEMPAAPVFIDGHKAMTLRGPKIAEDFQLLVADYIEKRFGHGQAAAE.

[4Fe-4S] cluster-binding residues include cysteine 304, cysteine 307, cysteine 350, and glutamate 357.

Belongs to the IspG family. [4Fe-4S] cluster is required as a cofactor.

It catalyses the reaction (2E)-4-hydroxy-3-methylbut-2-enyl diphosphate + oxidized [flavodoxin] + H2O + 2 H(+) = 2-C-methyl-D-erythritol 2,4-cyclic diphosphate + reduced [flavodoxin]. Its pathway is isoprenoid biosynthesis; isopentenyl diphosphate biosynthesis via DXP pathway; isopentenyl diphosphate from 1-deoxy-D-xylulose 5-phosphate: step 5/6. Functionally, converts 2C-methyl-D-erythritol 2,4-cyclodiphosphate (ME-2,4cPP) into 1-hydroxy-2-methyl-2-(E)-butenyl 4-diphosphate. This Sinorhizobium medicae (strain WSM419) (Ensifer medicae) protein is 4-hydroxy-3-methylbut-2-en-1-yl diphosphate synthase (flavodoxin).